The sequence spans 347 residues: Protein YIPF1 homolog (347 aa).

Residues 1 to 115 (MSNYNNKHHD…FSDNVPLNTN (115 aa)) are disordered. Over 1–166 (MSNYNNKHHD…FFNLIRENPD (166 aa)) the chain is Cytoplasmic. The segment covering 34-47 (NLFPNTNIDYNDYT) has biased composition (polar residues). Low complexity-rich tracts occupy residues 48 to 67 (QNRGQQQQQQPAYQPDLQFQ) and 76 to 104 (NSNTSPNNNNNNNSNNNNSNKIGGNSSNN). Residues 105–115 (KFSDNVPLNTN) show a composition bias toward polar residues. The helical transmembrane segment at 167-187 (LYGPFWVLTSLVFIVAVTSNL) threads the bilayer. The Lumenal portion of the chain corresponds to 188-207 (NEYFHSSDHKSWEVDIQKIV). The helical transmembrane segment at 208–228 (YSAITIYGYSFVIPLILWGIF) threads the bilayer. Residues 229 to 232 (KWMN) lie on the Cytoplasmic side of the membrane. A helical transmembrane segment spans residues 233-253 (LGLRLLDMLCIYGYTLFIFVP). Topologically, residues 254 to 255 (AS) are lumenal. Residues 256-276 (ILCVIPLQLVQWIIVAIASIV) form a helical membrane-spanning segment. Residues 277–296 (SGLFLVTNIFTPLKEDFTKR) lie on the Cytoplasmic side of the membrane. The chain crosses the membrane as a helical span at residues 297–317 (GLIICAVIGALHIGLALVLKL). Residues 318 to 347 (YFFANSTENFTISDSSSTPTPTPTNTTKLL) lie on the Lumenal side of the membrane. N-linked (GlcNAc...) asparagine glycosylation is found at Asn322, Asn326, and Asn342.

It belongs to the YIP1 family.

Its subcellular location is the golgi apparatus. It localises to the cis-Golgi network membrane. It is found in the trans-Golgi network membrane. The protein resides in the late endosome membrane. This chain is Protein YIPF1 homolog (yipf1), found in Dictyostelium discoideum (Social amoeba).